Reading from the N-terminus, the 173-residue chain is Ribosome maturation factor RimP (173 aa).

It belongs to the RimP family.

The protein localises to the cytoplasm. Its function is as follows. Required for maturation of 30S ribosomal subunits. The sequence is that of Ribosome maturation factor RimP from Chlorobaculum tepidum (strain ATCC 49652 / DSM 12025 / NBRC 103806 / TLS) (Chlorobium tepidum).